A 641-amino-acid chain; its full sequence is Sodium-dependent nutrient amino acid transporter 1 (641 aa).

Polar residues predominate over residues 1–21 (MELKNIEQQPQLQNGNGTATE). Residues 1 to 37 (MELKNIEQQPQLQNGNGTATENNEKGEQKPTEGGERT) form a disordered region. Topologically, residues 1–38 (MELKNIEQQPQLQNGNGTATENNEKGEQKPTEGGERTN) are cytoplasmic. Residues 22 to 35 (NNEKGEQKPTEGGE) are compositionally biased toward basic and acidic residues. The next 3 helical transmembrane spans lie at 39-59 (WGNGLEFLMSCISVSVGLGNV), 72-92 (GAFLIPYIIVLFLIGKPMYYL), and 125-145 (TVCIISYYSSLLALTLYYLFV). N-linked (GlcNAc...) asparagine glycosylation is found at asparagine 181, asparagine 190, and asparagine 198. 9 consecutive transmembrane segments (helical) span residues 229 to 249 (PDWKLTLALLVSWIVTFLVIM), 258 to 278 (AAYFLAIFPYVVLFVLLGRAV), 307 to 327 (AVVQCFFSLAVSCGPIIMFAS), 341 to 361 (IVTTLDTLTSLLGGITIFAIL), 401 to 421 (LFSVLFFFMLFVLGIGSIVAL), 441 to 461 (VALVTSICGFLLGLVYVTPGG), 474 to 494 (TYVVFILAIFELAGIVWIYGL), 516 to 536 (CWSFFTPVMMIIIFIYSMATI), and 552 to 572 (IAGWIVFAIGTAQFPLWGIWY).

The protein belongs to the sodium:neurotransmitter symporter (SNF) (TC 2.A.22) family.

It localises to the membrane. In terms of biological role, unusual broad substrate spectrum amino acid:sodium cotransporter that promotes absorption of the D isomers of essential amino acids. Neutral amino acids are the preferred substrates, especially methionine and phenylalanine. This Drosophila willistoni (Fruit fly) protein is Sodium-dependent nutrient amino acid transporter 1.